Here is a 179-residue protein sequence, read N- to C-terminus: Adenine phosphoribosyltransferase (179 aa).

The protein belongs to the purine/pyrimidine phosphoribosyltransferase family. As to quaternary structure, homodimer.

It is found in the cytoplasm. It carries out the reaction AMP + diphosphate = 5-phospho-alpha-D-ribose 1-diphosphate + adenine. Its pathway is purine metabolism; AMP biosynthesis via salvage pathway; AMP from adenine: step 1/1. Catalyzes a salvage reaction resulting in the formation of AMP, that is energically less costly than de novo synthesis. The sequence is that of Adenine phosphoribosyltransferase from Nitrobacter hamburgensis (strain DSM 10229 / NCIMB 13809 / X14).